A 161-amino-acid polypeptide reads, in one-letter code: N5-carboxyaminoimidazole ribonucleotide mutase (161 aa).

3 residues coordinate substrate: S9, D12, and R39.

The protein belongs to the AIR carboxylase family. Class I subfamily.

It carries out the reaction 5-carboxyamino-1-(5-phospho-D-ribosyl)imidazole + H(+) = 5-amino-1-(5-phospho-D-ribosyl)imidazole-4-carboxylate. It functions in the pathway purine metabolism; IMP biosynthesis via de novo pathway; 5-amino-1-(5-phospho-D-ribosyl)imidazole-4-carboxylate from 5-amino-1-(5-phospho-D-ribosyl)imidazole (N5-CAIR route): step 2/2. Its function is as follows. Catalyzes the conversion of N5-carboxyaminoimidazole ribonucleotide (N5-CAIR) to 4-carboxy-5-aminoimidazole ribonucleotide (CAIR). The chain is N5-carboxyaminoimidazole ribonucleotide mutase from Aliivibrio fischeri (strain ATCC 700601 / ES114) (Vibrio fischeri).